A 312-amino-acid polypeptide reads, in one-letter code: MELLALRWVLLAGTLLSTSAASSALQEGDLGSITVIMDMAPNSFDDQYVGCAHVMWANLQKLKCTEFARNYAYAVGWRKAAAEWQKRWGYLAHPMQLRPEQAIALLAYSAASNLYQQFNAATRQGGCSHQYYVHFYHFKTLHFLLTQALFALRASQPRCYYVYRGVRGIRFMTQRGKSVRFGQFTSTSLRKDVAVNFGQDTFFVVKTCYGVPIKQFSFYPSEDEVLIPPFEVFEVTNFCTGNGRIQIYLRSKGKMSRHNCELLKPRGGQWGRGHQEVGLGLSPGLALPVLPCSNCSCWGSGHRAGDPIPAAV.

The N-terminal stretch at 1-20 (MELLALRWVLLAGTLLSTSA) is a signal peptide. Residues 21 to 31 (ASSALQEGDLG) constitute a propeptide that is removed on maturation. 2 disulfide bridges follow: Cys51–Cys260 and Cys159–Cys208. A TR mART core domain is found at 71-256 (YAYAVGWRKA…IYLRSKGKMS (186 aa)). Positions 108, 164, and 183 each coordinate NAD(+). The active site involves Arg164. Ser186 is an active-site residue. NAD(+) is bound at residue Ser217. Glu224 is a catalytic residue. The propeptide occupies 267–312 (GGQWGRGHQEVGLGLSPGLALPVLPCSNCSCWGSGHRAGDPIPAAV).

It belongs to the Arg-specific ADP-ribosyltransferase family.

It is found in the secreted. The protein localises to the extracellular space. It catalyses the reaction L-arginyl-[protein] + NAD(+) = N(omega)-(ADP-D-ribosyl)-L-arginyl-[protein] + nicotinamide + H(+). This chain is NAD(P)(+)--arginine ADP-ribosyltransferase 2, found in Gallus gallus (Chicken).